The following is a 189-amino-acid chain: GTPase NRas (189 aa).

Residues 10 to 18 (GAGGVGKSA) and 29 to 30 (VD) contribute to the GTP site. The Effector region motif lies at 32–40 (YDPTIEDSY). GTP is bound at residue 57–61 (DTAGQ). Residue serine 89 is modified to Phosphoserine. Residue 116 to 119 (NKCD) coordinates GTP. The segment at 166-185 (YRMKKLNSSDDGTQGCMGLP) is hypervariable region. Lysine 170 participates in a covalent cross-link: Glycyl lysine isopeptide (Lys-Gly) (interchain with G-Cter in ubiquitin). Cysteine 181 carries S-palmitoyl cysteine lipidation. A lipid anchor (S-farnesyl cysteine) is attached at cysteine 186. A propeptide spans 187–189 (VVM) (removed in mature form).

This sequence belongs to the small GTPase superfamily. Ras family. Interacts (active GTP-bound form preferentially) with RGS14. Interacts (active GTP-bound form) with RASSF7. Interacts (active GTP-bound form) with both SHOC2 and PP1c (all isoforms) to form a tertiary complex; SHOC2 and PP1c preferably bind M-Ras/MRAS, but they also bind K-Ras/KRAS, N-Ras/NRAS and H-Ras/HRAS. Palmitoylated by the ZDHHC9-GOLGA7 complex. Depalmitoylated by ABHD17A, ABHD17B and ABHD17C. A continuous cycle of de- and re-palmitoylation regulates rapid exchange between plasma membrane and Golgi. Post-translationally, acetylation at Lys-104 prevents interaction with guanine nucleotide exchange factors (GEFs). In terms of processing, ubiquitinated by the BCR(LZTR1) E3 ubiquitin ligase complex at Lys-170 in a non-degradative manner, leading to inhibit Ras signaling by decreasing Ras association with membranes. Phosphorylation at Ser-89 enhances NRAS association with its downstream effectors.

It localises to the cell membrane. Its subcellular location is the golgi apparatus membrane. The catalysed reaction is GTP + H2O = GDP + phosphate + H(+). Alternates between an inactive form bound to GDP and an active form bound to GTP. Activated by a guanine nucleotide-exchange factor (GEF) and inactivated by a GTPase-activating protein (GAP). In terms of biological role, ras proteins bind GDP/GTP and possess intrinsic GTPase activity. This Pongo abelii (Sumatran orangutan) protein is GTPase NRas (NRAS).